A 312-amino-acid chain; its full sequence is Beta-lactamase regulatory protein BlaB (312 aa).

In Streptomyces cacaoi, this protein is Beta-lactamase regulatory protein BlaB (blaB).